Consider the following 96-residue polypeptide: ESAT-6-like protein EsxR (96 aa).

This sequence belongs to the WXG100 family. ESAT-6 subfamily.

The protein localises to the secreted. The protein is ESAT-6-like protein EsxR of Mycobacterium leprae (strain TN).